A 293-amino-acid chain; its full sequence is Ribosomal protein L11 methyltransferase (293 aa).

S-adenosyl-L-methionine-binding residues include T145, G166, D188, and N230.

Belongs to the methyltransferase superfamily. PrmA family.

It is found in the cytoplasm. The enzyme catalyses L-lysyl-[protein] + 3 S-adenosyl-L-methionine = N(6),N(6),N(6)-trimethyl-L-lysyl-[protein] + 3 S-adenosyl-L-homocysteine + 3 H(+). In terms of biological role, methylates ribosomal protein L11. This Shewanella halifaxensis (strain HAW-EB4) protein is Ribosomal protein L11 methyltransferase.